The following is a 240-amino-acid chain: Keratinocyte-associated protein 3 (240 aa).

The next 4 helical transmembrane spans lie at Val-21–Gly-41, Val-63–Ser-83, Val-94–Leu-114, and Ala-163–Tyr-183.

The protein belongs to the TMEM54 family. In terms of tissue distribution, expressed in skin, pancreas and keratinocytes.

It is found in the membrane. This is Keratinocyte-associated protein 3 (KRTCAP3) from Homo sapiens (Human).